Here is a 365-residue protein sequence, read N- to C-terminus: Probable flavin mononucleotide-dependent alkene reductase (365 aa).

FMN contacts are provided by residues Pro30 to Thr32, Ala63, and Gln105. Tyr191 serves as the catalytic Proton donor. Residues Arg238, Ser303, and Gly324–Thr325 contribute to the FMN site.

Belongs to the NADH:flavin oxidoreductase/NADH oxidase family. In terms of assembly, monomer. It depends on FMN as a cofactor.

The protein resides in the cytoplasm. The protein localises to the cytosol. Functionally, may function as a flavin mononucleotide (FMN)-dependent alkene reductase on substrates carrying alpha,beta-unsaturated carbonyl groups (ketones, aldehydes, carboxylic acids, esters, lactones or cyclic imides). The catalysis depends on NAD(P)H, which acts as a hydride donor for the reduction. Seems to be involved in metabolic pathways required for efficient replication of amastigotes within macrophages. Its function is as follows. Acts as a FMN-dependent nitroreductase that activates anti-leishmanial bicyclic nitroaromatic prodrugs including delamanid, DNDI-VL-2098 and (R)-PA-824, forming toxic products that kill the parasites. The sequence is that of Probable flavin mononucleotide-dependent alkene reductase from Leishmania infantum.